Reading from the N-terminus, the 171-residue chain is Orange carotenoid-binding domain-containing protein (171 aa).

The OCP N-terminal domain occupies 21-171 (GDAVASTITV…ADMGVDPLAD (151 aa)).

Belongs to the orange carotenoid-binding protein family. 3'-hydroxyechinenone serves as cofactor.

The protein localises to the cellular thylakoid membrane. Its function is as follows. Might act as a photo-protectant, protecting against damage induced by excess light via a process known as non-photochemical quenching (NPQ). This Nostoc sp. (strain PCC 7120 / SAG 25.82 / UTEX 2576) protein is Orange carotenoid-binding domain-containing protein.